Consider the following 185-residue polypeptide: MISAGDLRKGTTFEQDGQVYVVVEFLHVKPGKGAAFVRTKLKNAITGAVTETTFNPTAKLQEAVIERKEMQYLYTDGELYYFMDQETFEQIPLNYDKVEEAIKFLKENMFATIKFFKGEAFSVEAPNFVELLISHTEPGAKGNTTSNVMKPATLETGATIQVPLFVNEGETIRVDTRTGEYMERV.

Belongs to the elongation factor P family.

Its subcellular location is the cytoplasm. Its pathway is protein biosynthesis; polypeptide chain elongation. Functionally, involved in peptide bond synthesis. Stimulates efficient translation and peptide-bond synthesis on native or reconstituted 70S ribosomes in vitro. Probably functions indirectly by altering the affinity of the ribosome for aminoacyl-tRNA, thus increasing their reactivity as acceptors for peptidyl transferase. The sequence is that of Elongation factor P from Clostridium botulinum (strain ATCC 19397 / Type A).